We begin with the raw amino-acid sequence, 151 residues long: Major latex allergen Hev b 5 (151 aa).

The tract at residues 1–151 (MASVEVESAA…TEVPVEKTEE (151 aa)) is disordered. The residue at position 2 (Ala-2) is an N-acetylalanine. The span at 17–31 (ETPEVTKAEETKTEE) shows a compositional bias: basic and acidic residues. Low complexity-rich tracts occupy residues 36 to 45 (PASEQETADA) and 53 to 64 (TAAPAEPEAPAP). Composition is skewed to basic and acidic residues over residues 65–80 (ETEK…KTEE), 103–113 (EEPKHETKETE), and 122–133 (EGEKPAEEEKPI). Residues 134 to 144 (TEAAETATTEV) are compositionally biased toward low complexity.

It to kiwi fruit protein PKIWI501. The N-terminus is blocked.

The polypeptide is Major latex allergen Hev b 5 (Hevea brasiliensis (Para rubber tree)).